We begin with the raw amino-acid sequence, 197 residues long: Phosphoheptose isomerase (197 aa).

The 161-residue stretch at 37 to 197 folds into the SIS domain; the sequence is MLQCLMNDGK…CIDSVLLEGM (161 aa). Residue 52–54 coordinates substrate; that stretch reads NGG. Zn(2+)-binding residues include histidine 61 and glutamate 65. Substrate-binding positions include glutamate 65, 94-95, 120-122, serine 125, and glutamine 175; these read ND and STS. 2 residues coordinate Zn(2+): glutamine 175 and histidine 183.

This sequence belongs to the SIS family. GmhA subfamily. Homotetramer. The cofactor is Zn(2+).

Its subcellular location is the cytoplasm. It catalyses the reaction 2 D-sedoheptulose 7-phosphate = D-glycero-alpha-D-manno-heptose 7-phosphate + D-glycero-beta-D-manno-heptose 7-phosphate. It functions in the pathway carbohydrate biosynthesis; D-glycero-D-manno-heptose 7-phosphate biosynthesis; D-glycero-alpha-D-manno-heptose 7-phosphate and D-glycero-beta-D-manno-heptose 7-phosphate from sedoheptulose 7-phosphate: step 1/1. In terms of biological role, catalyzes the isomerization of sedoheptulose 7-phosphate in D-glycero-D-manno-heptose 7-phosphate. This is Phosphoheptose isomerase from Neisseria meningitidis serogroup C / serotype 2a (strain ATCC 700532 / DSM 15464 / FAM18).